A 124-amino-acid polypeptide reads, in one-letter code: 5-hydroxyisourate hydrolase (124 aa).

The substrate site is built by His15, Arg53, and Tyr121.

This sequence belongs to the transthyretin family. 5-hydroxyisourate hydrolase subfamily. As to quaternary structure, homotetramer.

It catalyses the reaction 5-hydroxyisourate + H2O = 5-hydroxy-2-oxo-4-ureido-2,5-dihydro-1H-imidazole-5-carboxylate + H(+). Functionally, catalyzes the hydrolysis of 5-hydroxyisourate (HIU) to 2-oxo-4-hydroxy-4-carboxy-5-ureidoimidazoline (OHCU). The sequence is that of 5-hydroxyisourate hydrolase from Mesorhizobium japonicum (strain LMG 29417 / CECT 9101 / MAFF 303099) (Mesorhizobium loti (strain MAFF 303099)).